A 528-amino-acid polypeptide reads, in one-letter code: Benzoylformate decarboxylase (528 aa).

Residues N117, L118, and R120 each contribute to the Mg(2+) site. The interval 377–460 (TSTTAQMWQR…VIMNNGTYGA (84 aa)) is thiamine pyrophosphate binding. Residues D428, N455, and T457 each contribute to the Ca(2+) site.

Belongs to the TPP enzyme family. In terms of assembly, homotetramer. The cofactor is Ca(2+). Requires thiamine diphosphate as cofactor. Mg(2+) is required as a cofactor.

The catalysed reaction is phenylglyoxylate + H(+) = benzaldehyde + CO2. Its pathway is aromatic compound metabolism; (R)-mandelate degradation; benzoate from (R)-mandelate: step 3/4. The sequence is that of Benzoylformate decarboxylase (mdlC) from Pseudomonas putida (Arthrobacter siderocapsulatus).